Reading from the N-terminus, the 180-residue chain is Centromere protein M (180 aa).

The protein localises to the nucleus. It localises to the chromosome. The protein resides in the centromere. Functionally, probable component of a centromeric complex involved in assembly of kinetochore proteins, mitotic progression and chromosome segregation. The polypeptide is Centromere protein M (cenpm) (Xenopus laevis (African clawed frog)).